The following is a 92-amino-acid chain: Small ribosomal subunit protein uS19 (92 aa).

This sequence belongs to the universal ribosomal protein uS19 family.

In terms of biological role, protein S19 forms a complex with S13 that binds strongly to the 16S ribosomal RNA. In Macrococcus caseolyticus (strain JCSC5402) (Macrococcoides caseolyticum), this protein is Small ribosomal subunit protein uS19.